The primary structure comprises 422 residues: 4-hydroxy-3-methylbut-2-en-1-yl diphosphate synthase (flavodoxin) (422 aa).

[4Fe-4S] cluster is bound by residues Cys316, Cys319, Cys362, and Glu369.

It belongs to the IspG family. Requires [4Fe-4S] cluster as cofactor.

The enzyme catalyses (2E)-4-hydroxy-3-methylbut-2-enyl diphosphate + oxidized [flavodoxin] + H2O + 2 H(+) = 2-C-methyl-D-erythritol 2,4-cyclic diphosphate + reduced [flavodoxin]. It functions in the pathway isoprenoid biosynthesis; isopentenyl diphosphate biosynthesis via DXP pathway; isopentenyl diphosphate from 1-deoxy-D-xylulose 5-phosphate: step 5/6. In terms of biological role, converts 2C-methyl-D-erythritol 2,4-cyclodiphosphate (ME-2,4cPP) into 1-hydroxy-2-methyl-2-(E)-butenyl 4-diphosphate. This is 4-hydroxy-3-methylbut-2-en-1-yl diphosphate synthase (flavodoxin) from Ehrlichia canis (strain Jake).